A 574-amino-acid polypeptide reads, in one-letter code: Developmental and secondary metabolism regulator veA (574 aa).

4 disordered regions span residues 1–22, 39–60, 255–500, and 513–540; these read MATR…SRIT, ERAR…VDPP, RSSD…GAGK, and RSYE…YPRR. The region spanning 25-230 is the Velvet domain; sequence GKKLTYKLNV…AEQGCRVRIR (206 aa). The short motif at 39–44 is the Nuclear localization signal element; sequence ERARAC. Pro residues-rich tracts occupy residues 314–323 and 330–341; these read RPLPPAPGPA and PAPPAPPAPPSH. 4 stretches are compositionally biased toward polar residues: residues 343-353, 385-394, 406-415, and 448-458; these read PGYQSHLSFGS, HARNPSTSAE, RMSTERSSYP, and VAQSAAPRSQT. Positions 457–501 are PEST; that stretch reads QTPSSSLVPSLPPLKALSGDYPNNLSQSSSSTSQSPSHDLGAGKK. 2 stretches are compositionally biased toward low complexity: residues 459–474 and 482–493; these read PSSS…KALS and SQSSSSTSQSPS. Positions 513–525 are enriched in basic and acidic residues; sequence RSYEDSFGHDDRP.

This sequence belongs to the velvet family. VeA subfamily. In terms of assembly, component of the heterotrimeric velvet complex composed of laeA, veA and velB; VeA acting as a bridging protein between laeA and velB.

The protein localises to the nucleus. Its subcellular location is the cytoplasm. Its function is as follows. Component of the velvet transcription factor complex that controls sexual/asexual developmental ratio in response to light, promoting sexual development in the darkness while stimulating asexual sporulation under illumination. The velvet complex hat acts as a global regulator for secondary metabolite gene expression. Controls the expression of the penicillin gene cluster. The sequence is that of Developmental and secondary metabolism regulator veA from Aspergillus oryzae (strain ATCC 42149 / RIB 40) (Yellow koji mold).